The following is a 369-amino-acid chain: Aminomethyltransferase (369 aa).

Belongs to the GcvT family. The glycine cleavage system is composed of four proteins: P, T, L and H.

It carries out the reaction N(6)-[(R)-S(8)-aminomethyldihydrolipoyl]-L-lysyl-[protein] + (6S)-5,6,7,8-tetrahydrofolate = N(6)-[(R)-dihydrolipoyl]-L-lysyl-[protein] + (6R)-5,10-methylene-5,6,7,8-tetrahydrofolate + NH4(+). The glycine cleavage system catalyzes the degradation of glycine. The sequence is that of Aminomethyltransferase from Xanthomonas axonopodis pv. citri (strain 306).